The sequence spans 49 residues: Large ribosomal subunit protein bL32c (49 aa).

The interval 1–23 (MTPKKRKSKSKKNLRKTNWKKKA) is disordered.

It belongs to the bacterial ribosomal protein bL32 family.

The protein resides in the plastid. It localises to the chloroplast. In Oltmannsiellopsis viridis (Marine flagellate), this protein is Large ribosomal subunit protein bL32c.